Here is a 556-residue protein sequence, read N- to C-terminus: MTMLNDPSKKYRAFPTIDLPDRTWPSKTIDAAPIWCSSDLRDGNQSLIEPMDSVKKLRFWKTLVSVGVKEIEASFPAASQTDFDFVRTLIEDGHIPDDTTIQVLTQAREDLIARTFESLRGAKKAIVHLYNATCPSFRRIVFNQDKAGVKEIAVNAAKLFVKYAAQQPETQWTFEYSPETFSATELEFAKEVCDAVIEVWNPTPENKVILNLPATVEVATPNIYADQIEWFGRHITRRDSVLISLHTHNDRGTGVAATELGLMAGADRVEGCLFGNGERTGNVDLVTVALNLYTQGINPELDFSDIDGVRKVVEECNQIPVHPRHPYVGDLVHTAFSGSHQDAIRKGFTQQKEGELWEVPYLPIDPADIGRSYEAVIRVNSQSGKGGIAYLLEQEYGISLPRRMQIEFSQVVQGETDRLGLEMTAEQIHALLRREYLQANTPYALISHRLQEENGNSAVDAEVHVDGETQHWRGKGKGALEALVAGLPVAVEIMDYNEHAIGSGTTAKAAAYIELRVNGDRAVHGVGIDENITTASFRALFSALNRSLSQAQAKAA.

The region spanning 33–307 is the Pyruvate carboxyltransferase domain; it reads PIWCSSDLRD…NPELDFSDID (275 aa). Mg(2+) contacts are provided by Asp-42, His-246, His-248, and Asn-282. The regulatory domain stretch occupies residues 439–556; that stretch reads ANTPYALISH…SLSQAQAKAA (118 aa).

Belongs to the alpha-IPM synthase/homocitrate synthase family. LeuA type 2 subfamily. As to quaternary structure, homodimer. Requires Mg(2+) as cofactor.

It is found in the cytoplasm. The enzyme catalyses 3-methyl-2-oxobutanoate + acetyl-CoA + H2O = (2S)-2-isopropylmalate + CoA + H(+). The protein operates within amino-acid biosynthesis; L-leucine biosynthesis; L-leucine from 3-methyl-2-oxobutanoate: step 1/4. Catalyzes the condensation of the acetyl group of acetyl-CoA with 3-methyl-2-oxobutanoate (2-ketoisovalerate) to form 3-carboxy-3-hydroxy-4-methylpentanoate (2-isopropylmalate). In Pseudomonas syringae pv. tomato (strain ATCC BAA-871 / DC3000), this protein is 2-isopropylmalate synthase.